A 367-amino-acid polypeptide reads, in one-letter code: Alginate lyase (367 aa).

The N-terminal stretch at 1-24 (MTAFKRIFSPALLVLALYGGAAHA) is a signal peptide. Residues 63–64 (SK), 136–137 (HT), and Tyr-254 contribute to the substrate site.

Belongs to the polysaccharide lyase 5 family.

It localises to the periplasm. The enzyme catalyses Eliminative cleavage of alginate to give oligosaccharides with 4-deoxy-alpha-L-erythro-hex-4-enuronosyl groups at their non-reducing ends and beta-D-mannuronate at their reducing end.. Its function is as follows. Catalyzes the depolymerization of alginate by cleaving the beta-1,4 glycosidic bond between two adjacent sugar residues via a beta-elimination mechanism. May serve to degrade mislocalized alginate that is trapped in the periplasmic space. The protein is Alginate lyase of Pseudomonas putida (strain W619).